Reading from the N-terminus, the 201-residue chain is Ephrin-A4 (201 aa).

Residues 1-25 (MRLLPLLRTVLWAAFLGSPLRGGSS) form the signal peptide. The Ephrin RBD domain occupies 26 to 155 (LRHVVYWNSS…RLQVSVCCKE (130 aa)). A glycan (N-linked (GlcNAc...) asparagine) is linked at asparagine 33. Cystine bridges form between cysteine 58-cysteine 99 and cysteine 86-cysteine 144. Serine 170 is lipidated: GPI-anchor amidated serine. Residues 171–201 (GTSGWRGGDTPSPLCLLLLLLLLILRLLRIL) constitute a propeptide, removed in mature form.

This sequence belongs to the ephrin family. Expressed in the adult spleen, lymph node, prostate, ovary, small intestine, and colon, and in fetal heart, lung, liver and kidney. Also detected in hematopoietic cell lines.

It localises to the cell membrane. The protein resides in the secreted. Cell surface GPI-bound ligand for Eph receptors, a family of receptor tyrosine kinases which are crucial for migration, repulsion and adhesion during neuronal, vascular and epithelial development. Binds promiscuously Eph receptors residing on adjacent cells, leading to contact-dependent bidirectional signaling into neighboring cells. May play a role in the interaction between activated B-lymphocytes and dendritic cells in tonsils. The sequence is that of Ephrin-A4 (EFNA4) from Homo sapiens (Human).